Consider the following 528-residue polypeptide: Phosphoenolpyruvate carboxykinase (ATP) (528 aa).

Positions 56, 192, and 198 each coordinate substrate. Residues lysine 198, histidine 217, and glycine 233–threonine 241 contribute to the ATP site. 2 residues coordinate Mn(2+): lysine 198 and histidine 217. Aspartate 254 contacts Mn(2+). The ATP site is built by glutamate 282, arginine 319, and threonine 444. Arginine 319 serves as a coordination point for substrate.

Belongs to the phosphoenolpyruvate carboxykinase (ATP) family. Requires Mn(2+) as cofactor.

Its subcellular location is the cytoplasm. It catalyses the reaction oxaloacetate + ATP = phosphoenolpyruvate + ADP + CO2. Its pathway is carbohydrate biosynthesis; gluconeogenesis. Involved in the gluconeogenesis. Catalyzes the conversion of oxaloacetate (OAA) to phosphoenolpyruvate (PEP) through direct phosphoryl transfer between the nucleoside triphosphate and OAA. This Bacillus cereus (strain 03BB102) protein is Phosphoenolpyruvate carboxykinase (ATP).